A 135-amino-acid chain; its full sequence is UPF0355 protein SH2586 (135 aa).

The segment at 105–135 is disordered; that stretch reads NSSHDEVEENNSAYEEIDITHYANESKGPKS.

This sequence belongs to the UPF0355 family.

The chain is UPF0355 protein SH2586 from Staphylococcus haemolyticus (strain JCSC1435).